We begin with the raw amino-acid sequence, 371 residues long: Chorismate synthase (371 aa).

NADP(+) contacts are provided by Arg-48 and Arg-54. FMN contacts are provided by residues 131 to 133, 245 to 246, Gly-290, 305 to 309, and Arg-331; these read RSS, NA, and KPTSS.

Belongs to the chorismate synthase family. In terms of assembly, homotetramer. FMNH2 is required as a cofactor.

The enzyme catalyses 5-O-(1-carboxyvinyl)-3-phosphoshikimate = chorismate + phosphate. It participates in metabolic intermediate biosynthesis; chorismate biosynthesis; chorismate from D-erythrose 4-phosphate and phosphoenolpyruvate: step 7/7. Functionally, catalyzes the anti-1,4-elimination of the C-3 phosphate and the C-6 proR hydrogen from 5-enolpyruvylshikimate-3-phosphate (EPSP) to yield chorismate, which is the branch point compound that serves as the starting substrate for the three terminal pathways of aromatic amino acid biosynthesis. This reaction introduces a second double bond into the aromatic ring system. The protein is Chorismate synthase of Mesorhizobium japonicum (strain LMG 29417 / CECT 9101 / MAFF 303099) (Mesorhizobium loti (strain MAFF 303099)).